The primary structure comprises 364 residues: DNA replication and repair protein RecF (364 aa).

Position 30–37 (30–37 (GNNGMGKT)) interacts with ATP.

Belongs to the RecF family.

It is found in the cytoplasm. In terms of biological role, the RecF protein is involved in DNA metabolism; it is required for DNA replication and normal SOS inducibility. RecF binds preferentially to single-stranded, linear DNA. It also seems to bind ATP. The chain is DNA replication and repair protein RecF from Porphyromonas gingivalis (strain ATCC BAA-308 / W83).